The following is a 169-amino-acid chain: Probable chemoreceptor glutamine deamidase CheD (169 aa).

Belongs to the CheD family.

It catalyses the reaction L-glutaminyl-[protein] + H2O = L-glutamyl-[protein] + NH4(+). Probably deamidates glutamine residues to glutamate on methyl-accepting chemotaxis receptors (MCPs), playing an important role in chemotaxis. This Solibacter usitatus (strain Ellin6076) protein is Probable chemoreceptor glutamine deamidase CheD.